The chain runs to 546 residues: Glutamate--tRNA ligase (546 aa).

The 'HIGH' region motif lies at 41-51; sequence PSPTGFQHIGG. The 'KMSKS' region motif lies at 293-297; sequence KLSKR. Lysine 296 is a binding site for ATP.

Belongs to the class-I aminoacyl-tRNA synthetase family. Glutamate--tRNA ligase type 1 subfamily. As to quaternary structure, monomer.

The protein resides in the cytoplasm. It catalyses the reaction tRNA(Glu) + L-glutamate + ATP = L-glutamyl-tRNA(Glu) + AMP + diphosphate. Its function is as follows. Catalyzes the attachment of glutamate to tRNA(Glu) in a two-step reaction: glutamate is first activated by ATP to form Glu-AMP and then transferred to the acceptor end of tRNA(Glu). This Clostridium perfringens (strain 13 / Type A) protein is Glutamate--tRNA ligase.